Here is a 61-residue protein sequence, read N- to C-terminus: MVMLFPDYIRDVNQMKSSLSFLDKIEEDDLAISIYRDRKLSRKELFPIYLGATTHLHKECY.

This is an uncharacterized protein from Methanocaldococcus jannaschii (strain ATCC 43067 / DSM 2661 / JAL-1 / JCM 10045 / NBRC 100440) (Methanococcus jannaschii).